The primary structure comprises 881 residues: Armadillo repeat-containing protein 3 (881 aa).

ARM repeat units lie at residues 15-54 (DVFDPITIESKKAATVVLMLKSPEEDILAKACEAIYKFAL), 57-96 (EENKATLLELGAVEPLTKLLTHEDKTVRRNAMMIFGILAS), 98-138 (SDVK…NMSV), 140-179 (YTGKVQIFEHGGLEPLIRLLSSSDPDVKKNSIECIYNLVQ), 181-220 (FQCRTTLQELNAIPPILELLRSEYPIIQLLALKTLGVITC), 222-262 (KEAR…NCLE), 264-304 (MDTM…KAAY), 306-345 (PENRKVFHEQEVEKCLVTLLGSDSDGTKIAASQAISALCE), 346-385 (NLSCKEFFNTQGIPQIVQLLRSDNEEVREAAALALANLTT), 388-427 (PANANAAAEADAIDPLINILSSKRDGAIANAATVLTNMAT), 429-468 (EPLRAIIQNHEIMHALLGPLHSTNTLVQSTAALTVAATAC), and 470-509 (VEARTQLRNCGGLVPLVGLLHSKNDEVRRHASWAVMVCAG). S-palmitoyl cysteine attachment occurs at residues Cys-507 and Cys-518. The segment at 605–659 (NNKSDTSPPPSMEDKSSDVGYGRSISSSSSLRRGSKEKANAIFGSPTEEKSEPAS) is disordered. A compositionally biased stretch (low complexity) spans 622-636 (DVGYGRSISSSSSLR).

As to quaternary structure, homodimer. Interacts with PIK3C3, PIK3R4 and BECN1. Interacts (via ARM domains) with ATG14. Palmitoylation is important for its function in autophagy. Testis-specific.

Its function is as follows. Essential for male fertility and sperm motility. During spermatogenesis, promotes the autophagic degradation of excessive ribosomes, providing energy resources for mitochondria and thus ensuring sperm flagellar motility. The protein is Armadillo repeat-containing protein 3 (Armc3) of Mus musculus (Mouse).